We begin with the raw amino-acid sequence, 509 residues long: Photosystem II CP47 reaction center protein (509 aa).

The next 6 helical transmembrane spans lie at 21 to 36 (AVHL…WAGS), 101 to 115 (IILS…IWHW), 140 to 156 (GIHL…FGAF), 203 to 218 (IAAG…FHLT), 237 to 252 (VLSS…AFVT), and 457 to 472 (NFAL…HGGR).

Belongs to the PsbB/PsbC family. PsbB subfamily. As to quaternary structure, PSII is composed of 1 copy each of membrane proteins PsbA, PsbB, PsbC, PsbD, PsbE, PsbF, PsbH, PsbI, PsbJ, PsbK, PsbL, PsbM, PsbT, PsbX, PsbY, PsbZ, Psb30/Ycf12, at least 3 peripheral proteins of the oxygen-evolving complex and a large number of cofactors. It forms dimeric complexes. Binds multiple chlorophylls. PSII binds additional chlorophylls, carotenoids and specific lipids. is required as a cofactor.

The protein resides in the plastid. The protein localises to the chloroplast thylakoid membrane. Functionally, one of the components of the core complex of photosystem II (PSII). It binds chlorophyll and helps catalyze the primary light-induced photochemical processes of PSII. PSII is a light-driven water:plastoquinone oxidoreductase, using light energy to abstract electrons from H(2)O, generating O(2) and a proton gradient subsequently used for ATP formation. In Trieres chinensis (Marine centric diatom), this protein is Photosystem II CP47 reaction center protein.